A 379-amino-acid chain; its full sequence is Alcohol dehydrogenase class-P (379 aa).

An N-acetylserine modification is found at Ser-2. Cys-47 is a Zn(2+) binding site. Thr-49 is an an alcohol binding site. Thr-49 contacts NAD(+). The Zn(2+) site is built by Asp-50, His-69, Glu-70, Cys-99, Cys-102, Cys-105, Cys-113, and Cys-177. His-69 lines the an alcohol pocket. Residues Val-206 and Asp-226 each coordinate NAD(+). Phosphoserine is present on Ser-229. Residues Arg-231, Thr-272, Val-295, Val-297, Thr-320, Phe-322, and Arg-372 each contribute to the NAD(+) site.

Belongs to the zinc-containing alcohol dehydrogenase family. Class-P subfamily. In terms of assembly, homodimer. The cofactor is Zn(2+). In terms of processing, glutathionylated. In terms of tissue distribution, root specific. Also detected in etiolated seedlings and leaves in cold conditions.

It localises to the cytoplasm. It catalyses the reaction a primary alcohol + NAD(+) = an aldehyde + NADH + H(+). It carries out the reaction a secondary alcohol + NAD(+) = a ketone + NADH + H(+). The enzyme catalyses ethanol + NAD(+) = acetaldehyde + NADH + H(+). Its activity is regulated as follows. Alcohol dehydrogenase activity show inverse correlation with the decreasing availability of oxygen. Slightly repressed by thiol-modifying agents N-ethylmaleimide (NEM) and 5,5-dithio-bis-(2-nitrobenzoic acid) (DTNB), as well as by methyl methanethiosulfonate (MMTS) in a dose-dependent manner. Inhibited by hydrogen peroxide H(2)O(2). Alcohol dehydrogenase catalyzing the reduction of toxic aldehydes to the corresponding alcohols. Mostly active on ethanol (EtOH), but exhibits broad substrate selectivity for primary and secondary alcohols (e.g. cinnamyl alcohol, octanol, geraniol, butanol, propyl alcohol, pentanol, isopentanol, ethylene glycol, isopropanol, methanol and tertiary butyl alcohol). Also catalyzes the reverse reaction to convert allyl alcohol to highly toxic acryl-aldehyde. Required for survival and acclimation in hypoxic conditions, especially in roots. Not able to catalyze NADH-dependent degradation of S-nitrosoglutathione (GSNO). The protein is Alcohol dehydrogenase class-P of Arabidopsis thaliana (Mouse-ear cress).